A 378-amino-acid polypeptide reads, in one-letter code: Cytochrome b (378 aa).

Helical transmembrane passes span 34 to 54 (FGSL…FLAM), 78 to 99 (WLLR…YLHV), 114 to 134 (WLIG…GYVL), and 179 to 199 (FFTF…IHLL). Residues His84 and His98 each coordinate heme b. Heme b-binding residues include His183 and His197. Residue His202 participates in a ubiquinone binding. The next 4 membrane-spanning stretches (helical) occupy residues 227-247 (FKDI…VLIS), 289-309 (LGGV…PFYN), 321-341 (INQV…WIGA), and 348-368 (YVLI…VNPL).

It belongs to the cytochrome b family. The main subunits of complex b-c1 are: cytochrome b, cytochrome c1 and the Rieske protein. Requires heme b as cofactor.

It is found in the mitochondrion inner membrane. Its function is as follows. Component of the ubiquinol-cytochrome c reductase complex (complex III or cytochrome b-c1 complex) that is part of the mitochondrial respiratory chain. The b-c1 complex mediates electron transfer from ubiquinol to cytochrome c. Contributes to the generation of a proton gradient across the mitochondrial membrane that is then used for ATP synthesis. This Drosophila simulans (Fruit fly) protein is Cytochrome b (mt:Cyt-b).